Consider the following 100-residue polypeptide: MNKLYWLTDLQLFASKKGVDSSKNGRDSNPKYLGAKLGDGQSTKAGQIIYRQRGNKIYPGLNVGQGKDHTLFAKTAGVVKYTKFMGDKTKVSVLPKEDNK.

The propeptide occupies 1–13 (MNKLYWLTDLQLF). Over residues 18-29 (GVDSSKNGRDSN) the composition is skewed to basic and acidic residues. The segment at 18 to 39 (GVDSSKNGRDSNPKYLGAKLGD) is disordered.

The protein belongs to the bacterial ribosomal protein bL27 family. Post-translationally, the N-terminus is cleaved by ribosomal processing cysteine protease Prp.

This chain is Large ribosomal subunit protein bL27, found in Ureaplasma urealyticum serovar 10 (strain ATCC 33699 / Western).